A 560-amino-acid polypeptide reads, in one-letter code: Eukaryotic translation initiation factor 3 subunit D-1 (560 aa).

A disordered region spans residues V98–S166. Residues K100–N121 are compositionally biased toward basic residues. Position 128 is a phosphothreonine (T128). Basic residues predominate over residues G147–H156. The segment at E291 to P305 is RNA gate.

This sequence belongs to the eIF-3 subunit D family. As to quaternary structure, component of the eukaryotic translation initiation factor 3 (eIF-3) complex. The eIF-3 complex interacts with pix.

It localises to the cytoplasm. MRNA cap-binding component of the eukaryotic translation initiation factor 3 (eIF-3) complex, which is involved in protein synthesis of a specialized repertoire of mRNAs and, together with other initiation factors, stimulates binding of mRNA and methionyl-tRNAi to the 40S ribosome. The eIF-3 complex specifically targets and initiates translation of a subset of mRNAs involved in cell proliferation. In the eIF-3 complex, eif3d specifically recognizes and binds the 7-methylguanosine cap of a subset of mRNAs. The polypeptide is Eukaryotic translation initiation factor 3 subunit D-1 (Drosophila yakuba (Fruit fly)).